The primary structure comprises 689 residues: Beta-adrenergic receptor kinase 1 (689 aa).

Residues 1–190 (MADLEAVLAD…ELNIHLTMND (190 aa)) are N-terminal. In terms of domain architecture, RGS spans 54–175 (TFEKIFSQKL…IESDKFTRFC (122 aa)). In terms of domain architecture, Protein kinase spans 191–453 (FSVHRIIGRG…AQEVKESPFF (263 aa)). ATP-binding positions include 197 to 205 (IGRGGFGEV) and K220. The active-site Proton acceptor is D317. The AGC-kinase C-terminal domain maps to 454-521 (RSLDWQMVFL…TISERWQQEV (68 aa)). The PH domain occupies 558 to 652 (DCIMHGYMSK…WKKELRDAYR (95 aa)). At S670 the chain carries Phosphoserine.

It belongs to the protein kinase superfamily. AGC Ser/Thr protein kinase family. GPRK subfamily. As to quaternary structure, interacts with the heterodimer formed by GNB1 and GNG2. Interacts with GIT1. Interacts with, and phosphorylates chemokine-stimulated CCR5. Interacts with ARRB1. Interacts with LPAR1 and LPAR2. Interacts with RALA in response to LPAR1 activation. ADRBK1 and RALA mutually inhibit each other's binding to LPAR1. Interacts with ADRB2. In terms of tissue distribution, expressed in peripheral blood leukocytes.

The protein localises to the cytoplasm. It is found in the cell membrane. It localises to the postsynapse. The protein resides in the presynapse. It catalyses the reaction [beta-adrenergic receptor] + ATP = [beta-adrenergic receptor]-phosphate + ADP + H(+). In contrast to other AGC family kinases, the catalytic activity is solely regulated by the binding of substrates and ligands, not by phosphorylation of the kinase domain. Specifically phosphorylates the agonist-occupied form of the beta-adrenergic and closely related receptors, probably inducing a desensitization of them. Key regulator of LPAR1 signaling. Competes with RALA for binding to LPAR1 thus affecting the signaling properties of the receptor. Desensitizes LPAR1 and LPAR2 in a phosphorylation-independent manner. Positively regulates ciliary smoothened (SMO)-dependent Hedgehog (Hh) signaling pathway by facilitating the trafficking of SMO into the cilium and the stimulation of SMO activity. Inhibits relaxation of airway smooth muscle in response to blue light. This is Beta-adrenergic receptor kinase 1 from Homo sapiens (Human).